A 262-amino-acid chain; its full sequence is Apolipoprotein A-I-2 (262 aa).

A signal peptide spans 1 to 18 (MQFLALALTILLAAATQA). The interval 32–63 (VKVAMMEYMAQVKETAQRSIDHLDDTEYKEYK) is 3 X approximate tandem repeats. 2 tandem repeats follow at residues 64-85 (VQLS…ESLA) and 87-107 (YSEA…AEVM). The interval 64–262 (VQLSQSLDNL…YETISQAMKA (199 aa)) is 10 X approximate tandem repeats. The stretch at 108 to 118 (KDVEELRSQLE) is one 3; half-length repeat. 5 consecutive repeat copies span residues 119–140 (PKRA…KRLE), 141–162 (PLIK…VKIE), 163–184 (PVVE…AKLM), 185–206 (PIVE…TLAS), and 207–228 (PYAE…EKVV). The 9; half-length repeat unit spans residues 229 to 239 (PLTTDFKGQLG). Repeat 10 spans residues 240–262 (PAAEQAKEKLMALYETISQAMKA).

This sequence belongs to the apolipoprotein A1/A4/E family.

The protein localises to the secreted. In terms of biological role, participates in the reverse transport of cholesterol from tissues to the liver for excretion by promoting cholesterol efflux from tissues and by acting as a cofactor for the lecithin cholesterol acyltransferase (LCAT). This Oncorhynchus mykiss (Rainbow trout) protein is Apolipoprotein A-I-2.